The sequence spans 177 residues: B-phycoerythrin beta chain (177 aa).

2 residues coordinate phycourobilin: Cys50 and Cys61. Asn72 carries the N4-methylasparagine modification. 2 residues coordinate (2R,3E)-phycoerythrobilin: Cys82 and Cys158.

This sequence belongs to the phycobiliprotein family. As to quaternary structure, heteromer of 6 alpha, 6 beta and one gamma chain. Post-translationally, contains two covalently linked phycoerythrobilin chromophores and one covalently linked phycourobilin chromophore.

It is found in the plastid. It localises to the chloroplast thylakoid membrane. In terms of biological role, light-harvesting photosynthetic bile pigment-protein from the phycobiliprotein complex. This Porphyridium sordidum (Red alga) protein is B-phycoerythrin beta chain (cpeB).